The sequence spans 534 residues: CTP synthase (534 aa).

Residues 1–266 (MKQKFIFVTG…DELIVARLGL (266 aa)) form an amidoligase domain region. A CTP-binding site is contributed by Ser-14. Ser-14 lines the UTP pocket. ATP is bound by residues 15–20 (SIGKGL) and Asp-72. 2 residues coordinate Mg(2+): Asp-72 and Glu-140. Residues 147 to 149 (DIE), 187 to 192 (KSKPTQ), and Lys-223 each bind CTP. UTP contacts are provided by residues 187–192 (KSKPTQ) and Lys-223. The region spanning 291–534 (KIGVVGKYVD…HFVKASLKKK (244 aa)) is the Glutamine amidotransferase type-1 domain. L-glutamine is bound at residue Gly-353. Cys-380 (nucleophile; for glutamine hydrolysis) is an active-site residue. L-glutamine contacts are provided by residues 381 to 384 (FGMQ), Glu-404, and Arg-464. Catalysis depends on residues His-509 and Glu-511.

This sequence belongs to the CTP synthase family. In terms of assembly, homotetramer.

The enzyme catalyses UTP + L-glutamine + ATP + H2O = CTP + L-glutamate + ADP + phosphate + 2 H(+). The catalysed reaction is L-glutamine + H2O = L-glutamate + NH4(+). It catalyses the reaction UTP + NH4(+) + ATP = CTP + ADP + phosphate + 2 H(+). It participates in pyrimidine metabolism; CTP biosynthesis via de novo pathway; CTP from UDP: step 2/2. Allosterically activated by GTP, when glutamine is the substrate; GTP has no effect on the reaction when ammonia is the substrate. The allosteric effector GTP functions by stabilizing the protein conformation that binds the tetrahedral intermediate(s) formed during glutamine hydrolysis. Inhibited by the product CTP, via allosteric rather than competitive inhibition. Functionally, catalyzes the ATP-dependent amination of UTP to CTP with either L-glutamine or ammonia as the source of nitrogen. Regulates intracellular CTP levels through interactions with the four ribonucleotide triphosphates. In Bdellovibrio bacteriovorus (strain ATCC 15356 / DSM 50701 / NCIMB 9529 / HD100), this protein is CTP synthase.